Reading from the N-terminus, the 174-residue chain is Peptide deformylase (174 aa).

Fe cation is bound by residues Cys96 and His138. Glu139 is an active-site residue. His142 lines the Fe cation pocket.

It belongs to the polypeptide deformylase family. Fe(2+) is required as a cofactor.

The catalysed reaction is N-terminal N-formyl-L-methionyl-[peptide] + H2O = N-terminal L-methionyl-[peptide] + formate. Its function is as follows. Removes the formyl group from the N-terminal Met of newly synthesized proteins. Requires at least a dipeptide for an efficient rate of reaction. N-terminal L-methionine is a prerequisite for activity but the enzyme has broad specificity at other positions. This chain is Peptide deformylase, found in Helicobacter pylori (strain P12).